Consider the following 75-residue polypeptide: Large ribosomal subunit protein bL31 (75 aa).

Residues C16, C18, C37, and C40 each contribute to the Zn(2+) site.

This sequence belongs to the bacterial ribosomal protein bL31 family. Type A subfamily. Part of the 50S ribosomal subunit. Zn(2+) serves as cofactor.

Functionally, binds the 23S rRNA. The polypeptide is Large ribosomal subunit protein bL31 (Pseudomonas syringae pv. tomato (strain ATCC BAA-871 / DC3000)).